The following is a 92-amino-acid chain: C-C motif chemokine 3 (92 aa).

The signal sequence occupies residues 1-26 (MQVSTAALAVLLCTVALCNRISATFA). Intrachain disulfides connect C33–C57 and C34–C73.

This sequence belongs to the intercrine beta (chemokine CC) family. As to quaternary structure, self-associates. Also heterodimer of MIP-1-alpha(4-69) and MIP-1-beta(3-69). Interacts with CCR1.

It is found in the secreted. Functionally, monokine with inflammatory and chemokinetic properties. Binds to CCR1, CCR4 and CCR5. One of the major HIV-suppressive factors produced by CD8+ T-cells. Recombinant MIP-1-alpha induces a dose-dependent inhibition of different strains of HIV-1, HIV-2, and simian immunodeficiency virus (SIV). In Macaca mulatta (Rhesus macaque), this protein is C-C motif chemokine 3 (CCL3).